Consider the following 236-residue polypeptide: Probable sulfate/thiosulfate import ATP-binding protein CysA (236 aa).

Residues 3 to 233 form the ABC transporter domain; the sequence is ILIENISKRF…PTNTFVTNFL (231 aa). 35-42 lines the ATP pocket; it reads GPSGSGKS.

The protein belongs to the ABC transporter superfamily. Sulfate/tungstate importer (TC 3.A.1.6) family.

It is found in the plastid. Its subcellular location is the chloroplast. It carries out the reaction sulfate(out) + ATP + H2O = sulfate(in) + ADP + phosphate + H(+). The catalysed reaction is thiosulfate(out) + ATP + H2O = thiosulfate(in) + ADP + phosphate + H(+). Part of the ABC transporter complex involved in sulfate/thiosulfate import. Responsible for energy coupling to the transport system. The chain is Probable sulfate/thiosulfate import ATP-binding protein CysA from Chlorella vulgaris (Green alga).